Here is a 548-residue protein sequence, read N- to C-terminus: Chaperonin GroEL (548 aa).

ATP contacts are provided by residues 30–33 (TLGP), Lys51, 87–91 (DGTTT), Gly415, and Asp494.

Belongs to the chaperonin (HSP60) family. As to quaternary structure, forms a cylinder of 14 subunits composed of two heptameric rings stacked back-to-back. Interacts with the co-chaperonin GroES.

The protein localises to the cytoplasm. It catalyses the reaction ATP + H2O + a folded polypeptide = ADP + phosphate + an unfolded polypeptide.. Its function is as follows. Together with its co-chaperonin GroES, plays an essential role in assisting protein folding. The GroEL-GroES system forms a nano-cage that allows encapsulation of the non-native substrate proteins and provides a physical environment optimized to promote and accelerate protein folding. The chain is Chaperonin GroEL from Oleispira antarctica.